The following is a 382-amino-acid chain: Lipid-A-disaccharide synthase (382 aa).

The protein belongs to the LpxB family.

It carries out the reaction 2-N,3-O-bis[(3R)-3-hydroxytetradecanoyl]-alpha-D-glucosaminyl 1-phosphate + UDP-2-N,3-O-bis[(3R)-3-hydroxytetradecanoyl]-alpha-D-glucosamine = lipid A disaccharide (E. coli) + UDP + H(+). It catalyses the reaction a lipid X + a UDP-2-N,3-O-bis[(3R)-3-hydroxyacyl]-alpha-D-glucosamine = a lipid A disaccharide + UDP + H(+). It participates in glycolipid biosynthesis; lipid IV(A) biosynthesis; lipid IV(A) from (3R)-3-hydroxytetradecanoyl-[acyl-carrier-protein] and UDP-N-acetyl-alpha-D-glucosamine: step 5/6. Functionally, condensation of UDP-2,3-diacylglucosamine and 2,3-diacylglucosamine-1-phosphate to form lipid A disaccharide, a precursor of lipid A, a phosphorylated glycolipid that anchors the lipopolysaccharide to the outer membrane of the cell. The chain is Lipid-A-disaccharide synthase from Escherichia coli O127:H6 (strain E2348/69 / EPEC).